An 805-amino-acid polypeptide reads, in one-letter code: Probable exo-1,4-beta-xylosidase xlnD (805 aa).

An N-terminal signal peptide occupies residues Met-1–Gly-17. Residues Asn-20, Asn-115, Asn-140, Asn-235, and Asn-244 are each glycosylated (N-linked (GlcNAc...) asparagine). The active site involves Asp-308. N-linked (GlcNAc...) asparagine glycosylation is found at Asn-350, Asn-383, Asn-405, Asn-434, Asn-445, Asn-486, Asn-490, Asn-622, Asn-653, Asn-667, Asn-689, and Asn-711.

This sequence belongs to the glycosyl hydrolase 3 family.

It localises to the secreted. It carries out the reaction Hydrolysis of (1-&gt;4)-beta-D-xylans, to remove successive D-xylose residues from the non-reducing termini.. Its pathway is glycan degradation; xylan degradation. In terms of biological role, xylan 1,4-beta-xylosidase involved in the hydrolysis of xylan, a major structural heterogeneous polysaccharide found in plant biomass representing the second most abundant polysaccharide in the biosphere, after cellulose. The polypeptide is Probable exo-1,4-beta-xylosidase xlnD (xlnD) (Aspergillus aculeatus).